Reading from the N-terminus, the 660-residue chain is DNA mismatch repair protein MutL (660 aa).

This sequence belongs to the DNA mismatch repair MutL/HexB family.

This protein is involved in the repair of mismatches in DNA. It is required for dam-dependent methyl-directed DNA mismatch repair. May act as a 'molecular matchmaker', a protein that promotes the formation of a stable complex between two or more DNA-binding proteins in an ATP-dependent manner without itself being part of a final effector complex. The polypeptide is DNA mismatch repair protein MutL (Solibacter usitatus (strain Ellin6076)).